The primary structure comprises 156 residues: uncharacterized protein (156 aa).

A signal peptide spans 1 to 18 (MKKLLSIFLMAFSLNAFA). Positions 19–156 (QTNLADVQLK…AEQIRVFAEK (138 aa)) constitute a Thioredoxin domain. Cys54 and Cys57 are joined by a disulfide.

This sequence belongs to the thioredoxin family.

This is an uncharacterized protein from Haemophilus influenzae (strain ATCC 51907 / DSM 11121 / KW20 / Rd).